A 118-amino-acid chain; its full sequence is uncharacterized protein (118 aa).

The helical transmembrane segment at 21-38 (IVYFFFFFGLETFFSIIN) threads the bilayer.

The protein localises to the membrane. This is an uncharacterized protein from Dictyostelium discoideum (Social amoeba).